We begin with the raw amino-acid sequence, 182 residues long: Cytidylate kinase (182 aa).

7 to 15 serves as a coordination point for ATP; the sequence is GLPGSGTTS.

Belongs to the cytidylate kinase family. Type 2 subfamily.

Its subcellular location is the cytoplasm. The enzyme catalyses CMP + ATP = CDP + ADP. The catalysed reaction is dCMP + ATP = dCDP + ADP. In Methanoregula boonei (strain DSM 21154 / JCM 14090 / 6A8), this protein is Cytidylate kinase.